Here is a 372-residue protein sequence, read N- to C-terminus: NAD(P)H-quinone oxidoreductase subunit 1 (372 aa).

The next 8 membrane-spanning stretches (helical) occupy residues 27–47 (LLWI…GVLV), 97–117 (VLFT…WLIV), 128–148 (VGIG…GLLM), 166–186 (AAQS…IVMM), 204–224 (FLSW…ICAL), 266–286 (VLSA…PISI), 308–328 (SLGI…AILL), and 347–367 (FLLP…LAFP).

The protein belongs to the complex I subunit 1 family. As to quaternary structure, NDH-1 is composed of at least 11 different subunits.

It is found in the cellular thylakoid membrane. It catalyses the reaction a plastoquinone + NADH + (n+1) H(+)(in) = a plastoquinol + NAD(+) + n H(+)(out). The enzyme catalyses a plastoquinone + NADPH + (n+1) H(+)(in) = a plastoquinol + NADP(+) + n H(+)(out). Functionally, NDH-1 shuttles electrons from an unknown electron donor, via FMN and iron-sulfur (Fe-S) centers, to quinones in the respiratory and/or the photosynthetic chain. The immediate electron acceptor for the enzyme in this species is believed to be plastoquinone. Couples the redox reaction to proton translocation, and thus conserves the redox energy in a proton gradient. The chain is NAD(P)H-quinone oxidoreductase subunit 1 from Prochlorococcus marinus (strain NATL2A).